A 43-amino-acid chain; its full sequence is Oxygen-evolving enhancer protein 2 (43 aa).

Belongs to the PsbP family.

The protein localises to the plastid. Its subcellular location is the chloroplast thylakoid membrane. May be involved in the regulation of photosystem II. The sequence is that of Oxygen-evolving enhancer protein 2 from Physcomitrium patens (Spreading-leaved earth moss).